The following is a 340-amino-acid chain: CMP-N-acetylneuraminate-beta-galactosamide-alpha-2,3-sialyltransferase 1 (340 aa).

Residues 1 to 13 (MVTLRKRTLKVLT) are Cytoplasmic-facing. Residues 14 to 34 (FLVLFIFLTSFFLNYSHTMVA) form a helical; Signal-anchor for type II membrane protein membrane-spanning segment. Topologically, residues 35–340 (TTWFPKQMVL…INKIRIFKGR (306 aa)) are lumenal. 3 disulfides stabilise this stretch: cysteine 59–cysteine 64, cysteine 61–cysteine 139, and cysteine 142–cysteine 281. Asparagine 79 carries an N-linked (GlcNAc...) asparagine glycan. Glutamine 105 provides a ligand contact to substrate. An N-linked (GlcNAc...) asparagine glycan is attached at asparagine 114. Residues asparagine 147 and asparagine 170 each coordinate substrate. Residue asparagine 201 is glycosylated (N-linked (GlcNAc...) asparagine). Substrate-binding residues include tyrosine 230, tyrosine 266, glycine 270, glycine 290, histidine 299, and histidine 316. Asparagine 323 is a glycosylation site (N-linked (GlcNAc...) asparagine).

It belongs to the glycosyltransferase 29 family. In terms of processing, the soluble form derives from the membrane form by proteolytic processing.

Its subcellular location is the golgi apparatus. It is found in the golgi stack membrane. It localises to the trans-Golgi network membrane. The protein resides in the secreted. It carries out the reaction a beta-D-galactosyl-(1-&gt;3)-N-acetyl-alpha-D-galactosaminyl derivative + CMP-N-acetyl-beta-neuraminate = an N-acetyl-alpha-neuraminyl-(2-&gt;3)-beta-D-galactosyl-(1-&gt;3)-N-acetyl-alpha-D-galactosaminyl derivative + CMP + H(+). The catalysed reaction is a ganglioside GM1 + CMP-N-acetyl-beta-neuraminate = a ganglioside GD1a + CMP + H(+). The enzyme catalyses a ganglioside GM1 (d18:1(4E)) + CMP-N-acetyl-beta-neuraminate = a ganglioside GD1a (d18:1(4E)) + CMP + H(+). It catalyses the reaction ganglioside GM1 (d18:1(4E)/18:0) + CMP-N-acetyl-beta-neuraminate = ganglioside GD1a (18:1(4E)/18:0) + CMP + H(+). It carries out the reaction a ganglioside GA1 + CMP-N-acetyl-beta-neuraminate = a ganglioside GM1b + CMP + H(+). The catalysed reaction is a ganglioside GA1 (d18:1(4E)) + CMP-N-acetyl-beta-neuraminate = a ganglioside GM1b (d18:1(4E)) + CMP + H(+). The enzyme catalyses a ganglioside GD1b + CMP-N-acetyl-beta-neuraminate = a ganglioside GT1b + CMP + H(+). It catalyses the reaction a 3-O-[beta-D-galactosyl-(1-&gt;3)-N-acetyl-alpha-D-galactosaminyl]-L-threonyl-[protein] + CMP-N-acetyl-beta-neuraminate = a 3-O-[N-acetyl-alpha-neuraminyl-(2-&gt;3)-beta-D-galactosyl-(1-&gt;3)-N-acetyl-alpha-D-galactosaminyl]-L-threonyl-[protein] + CMP + H(+). It carries out the reaction a 3-O-[beta-D-galactosyl-(1-&gt;3)-N-acetyl-alpha-D-galactosaminyl]-L-seryl-[protein] + CMP-N-acetyl-beta-neuraminate = 3-O-[N-acetyl-alpha-neuraminyl-(2-&gt;3)-beta-D-galactosyl-(1-&gt;3)-N-acetyl-alpha-D-galactosaminyl]-L-seryl-[protein] + CMP + H(+). The protein operates within protein modification; protein glycosylation. Its pathway is glycolipid biosynthesis. Functionally, a beta-galactoside alpha2-&gt;3 sialyltransferase involved in terminal sialylation of glycoproteins and glycolipids. Catalyzes the transfer of sialic acid (N-acetyl-neuraminic acid; Neu5Ac) from the nucleotide sugar donor CMP-Neu5Ac onto acceptor Galbeta-(1-&gt;3)-GalNAc-terminated glycoconjugates through an alpha2-3 linkage. Adds sialic acid to the core 1 O-glycan, Galbeta-(1-&gt;3)-GalNAc-O-Ser/Thr, which is a major structure of mucin-type O-glycans. As part of a homeostatic mechanism that regulates CD8-positive T cell numbers, sialylates core 1 O-glycans of T cell glycoproteins, SPN/CD43 and PTPRC/CD45. Prevents premature apoptosis of thymic CD8-positive T cells prior to peripheral emigration, whereas in the secondary lymphoid organs controls the survival of CD8-positive memory T cells generated following a successful immune response. Transfers sialic acid to asialofetuin, presumably onto Galbeta-(1-&gt;3)-GalNAc-O-Ser. Sialylates GM1a, GA1 and GD1b gangliosides to form GD1a, GM1b and GT1b, respectively. This Pan troglodytes (Chimpanzee) protein is CMP-N-acetylneuraminate-beta-galactosamide-alpha-2,3-sialyltransferase 1 (ST3GAL1).